The following is a 988-amino-acid chain: MPIRQMKDSSETHLVIKTQPLKHHNPKTVQNGKIPPPSPSPVTVTTPATVTQSQASSPSPPSKNRSRRRNRGGRKSDQGDVCMRPSSRPRKPPPPSQTTSSAVSVATAGEIVAVNHQMQMGVRKNSNFAPRPGFGTLGTKCIVKANHFLADLPTKDLNQYDVTITPEVSSKSVNRAIIAELVRLYKESDLGRRLPAYDGRKSLYTAGELPFTWKEFSVKIVDEDDGIINGPKRERSYKVAIKFVARANMHHLGEFLAGKRADCPQEAVQILDIVLRELSVKRFCPVGRSFFSPDIKTPQRLGEGLESWCGFYQSIRPTQMGLSLNIDMASAAFIEPLPVIEFVAQLLGKDVLSKPLSDSDRVKIKKGLRGVKVEVTHRANVRRKYRVAGLTTQPTRELMFPVDENCTMKSVIEYFQEMYGFTIQHTHLPCLQVGNQKKASYLPMEACKIVEGQRYTKRLNEKQITALLKVTCQRPRDRENDILRTVQHNAYDQDPYAKEFGMNISEKLASVEARILPAPWLKYHENGKEKDCLPQVGQWNMMNKKMINGMTVSRWACVNFSRSVQENVARGFCNELGQMCEVSGMEFNPEPVIPIYSARPDQVEKALKHVYHTSMNKTKGKELELLLAILPDNNGSLYGDLKRICETELGLISQCCLTKHVFKISKQYLANVSLKINVKMGGRNTVLVDAISCRIPLVSDIPTIIFGADVTHPENGEESSPSIAAVVASQDWPEVTKYAGLVCAQAHRQELIQDLYKTWQDPVRGTVSGGMIRDLLISFRKATGQKPLRIIFYRDGVSEGQFYQVLLYELDAIRKACASLEPNYQPPVTFIVVQKRHHTRLFANNHRDKNSTDRSGNILPGTVVDTKICHPTEFDFYLCSHAGIQGTSRPAHYHVLWDENNFTADGIQSLTNNLCYTYARCTRSVSIVPPAYYAHLAAFRARFYLEPEIMQDNGSPGKKNTKTTTVGDVGVKPLPALKENVKRVMFYC.

Residues 1–11 (MPIRQMKDSSE) are compositionally biased toward basic and acidic residues. The interval 1 to 103 (MPIRQMKDSS…PPSQTTSSAV (103 aa)) is disordered. Over residues 41–57 (PVTVTTPATVTQSQASS) the composition is skewed to low complexity. The span at 64-73 (NRSRRRNRGG) shows a compositional bias: basic residues. Positions 338-451 (PVIEFVAQLL…LPMEACKIVE (114 aa)) constitute a PAZ domain. The Piwi domain occupies 625-946 (LLLAILPDNN…AAFRARFYLE (322 aa)).

This sequence belongs to the argonaute family. Ago subfamily. In terms of assembly, interacts with GATA18/HAN and KNAT1/BP. Interacts with RICE1 and RICE2 that act as cofactors. As to expression, expressed in roots, stems, leaves, developing embryo, siliques, inflorescences, provascular tissue, shoot apical meristem (SAM) and adaxial (upper) sides of lateral organ primordia. Observed in the floral meristem, the adaxial side of sepal primordia, and the provascular tissue.

Its subcellular location is the cytoplasm. Functionally, involved in RNA-mediated post-transcriptional gene silencing (PTGS). Main component of the RNA-induced silencing complex (RISC) that binds to a short guide RNA such as a microRNA (miRNA) or small interfering RNA (siRNA). RISC uses the mature miRNA or siRNA as a guide for slicer-directed cleavage of homologous mRNAs to repress gene expression. Required for reliable formation of primary and axillary shoot apical meristems. Specifies leaf adaxial identity by repressing the miR165 and miR166 microRNAs in the embryonic shoot apex, in the shoot apical meristem (SAM) and leaf. Represses the microRNA miR398 which targets CCS1 chaperone mRNAs for translational inhibition. Acts as a negative regulator of AGO1 protein level. Like AGO1, is required for stem cell function and organ polarity. Unlike AGO1, is not subjected to small RNA-mediated repression itself. Essential for multiple processes in development. Coregulates, with GATA18/HAN, the shoot apical meristem (SAM) organization. The polypeptide is Protein argonaute 10 (Arabidopsis thaliana (Mouse-ear cress)).